Reading from the N-terminus, the 103-residue chain is Large ribosomal subunit protein uL24 (103 aa).

Belongs to the universal ribosomal protein uL24 family. As to quaternary structure, part of the 50S ribosomal subunit.

Functionally, one of two assembly initiator proteins, it binds directly to the 5'-end of the 23S rRNA, where it nucleates assembly of the 50S subunit. Its function is as follows. One of the proteins that surrounds the polypeptide exit tunnel on the outside of the subunit. The protein is Large ribosomal subunit protein uL24 of Bacillus anthracis (strain A0248).